The sequence spans 485 residues: Podocalyxin (485 aa).

An N-terminal signal peptide occupies residues 1–24; sequence MRPTLALSALLLLQLLLLSTPSLS. The segment at 22–267 is disordered; it reads SLSQDNGNKT…STPSSTWTSG (246 aa). Topologically, residues 25–386 are extracellular; sequence QDNGNKTDTS…PPEVNEDRFS (362 aa). Polar residues predominate over residues 26-57; it reads DNGNKTDTSDITSIDQNQDKPATNQPSNATPK. Residues asparagine 29 and asparagine 82 are each glycosylated (N-linked (GlcNAc...) asparagine). The segment covering 58–109 has biased composition (low complexity); the sequence is SSVQPPTPTSISTSSPDPKATQSSNSSVTTTSDSTTDRTSSSTSTVPTTSNS. Composition is skewed to polar residues over residues 110-128 and 135-149; these read GQTV…TALP and NASS…STKL. Asparagine 135, asparagine 144, and asparagine 156 each carry an N-linked (GlcNAc...) asparagine glycan. Residues 150 to 161 are compositionally biased toward low complexity; the sequence is PSTPTTNSTASP. Composition is skewed to polar residues over residues 163–176, 186–228, and 235–253; these read QPVS…TTVQ, DNTT…QPTG, and SVPT…TPVV. Asparagine 187 carries N-linked (GlcNAc...) asparagine glycosylation. Residues 254–267 show a composition bias toward low complexity; the sequence is SQGPSTPSSTWTSG. A glycan (N-linked (GlcNAc...) asparagine) is linked at asparagine 287. A helical transmembrane segment spans residues 387 to 407; the sequence is LPLIITIVCMASFLLLVAALY. Residues 408–485 are Cytoplasmic-facing; it reads GCCHQRISQR…DLDEEEDTHL (78 aa). Threonine 445 carries the phosphothreonine modification. Phosphoserine is present on serine 464. Threonine 483 bears the Phosphothreonine mark.

The protein belongs to the podocalyxin family. Monomer; when associated with the membrane raft. Oligomer; when integrated in the apical membrane. Interacts with NHERF2. Interacts (via the C-terminal PDZ-binding motif DTHL) with NHERF1 (via the PDZ domains); the interaction take place early in the secretory pathway and is necessary for its apical membrane sorting. Found in a complex with EZR, PODXL and NHERF2. Associates with the actin cytoskeleton through complex formation with EZR and NHERF2. Interacts (via the C-terminal PDZ-binding motif DTHL) with NHERF1 (via the PDZ domains); interaction is not detected in glomerular epithelium cells. Interacts (via the C-terminal PDZ-binding motif DTHL) with NHERF2 (via the PDZ 1 domain); interaction is detected in glomerular epithelium cells. Interacts with EZR. In terms of processing, N- and O-linked glycosylated. Sialoglycoprotein. As to expression, glomerular epithelium cell (podocyte) (at protein level).

It localises to the apical cell membrane. The protein resides in the cell projection. Its subcellular location is the microvillus. It is found in the membrane raft. The protein localises to the lamellipodium. It localises to the filopodium. The protein resides in the ruffle. Its subcellular location is the membrane. Its function is as follows. Involved in the regulation of both adhesion and cell morphology and cancer progression. Functions as an anti-adhesive molecule that maintains an open filtration pathway between neighboring foot processes in the podocyte by charge repulsion. Acts as a pro-adhesive molecule, enhancing the adherence of cells to immobilized ligands, increasing the rate of migration and cell-cell contacts in an integrin-dependent manner. Induces the formation of apical actin-dependent microvilli. Involved in the formation of a preapical plasma membrane subdomain to set up initial epithelial polarization and the apical lumen formation during renal tubulogenesis. Plays a role in cancer development and aggressiveness by inducing cell migration and invasion through its interaction with the actin-binding protein EZR. Affects EZR-dependent signaling events, leading to increased activities of the MAPK and PI3K pathways in cancer cells. This Rattus norvegicus (Rat) protein is Podocalyxin (Podxl).